The chain runs to 542 residues: NXPE family member 4 (542 aa).

A signal peptide spans 1 to 26; it reads MKMMASRKSLWVLLFIVIFWISFTVF. Residues Asn91, Asn92, Asn159, and Asn223 are each glycosylated (N-linked (GlcNAc...) asparagine).

This sequence belongs to the NXPE family.

The protein localises to the secreted. The sequence is that of NXPE family member 4 (Nxpe4) from Rattus norvegicus (Rat).